The sequence spans 60 residues: MDHRLLEIIACPVCNGKLWYNQEKQELICKLDKLAFPLRDGIPVLLETEARVLTSEESQS.

The protein belongs to the UPF0434 family.

This chain is UPF0434 protein YcaR, found in Escherichia fergusonii (strain ATCC 35469 / DSM 13698 / CCUG 18766 / IAM 14443 / JCM 21226 / LMG 7866 / NBRC 102419 / NCTC 12128 / CDC 0568-73).